The following is a 913-amino-acid chain: Collagen alpha-2(I) chain (913 aa).

Residues 1–913 (SGGFDFSFLP…FGYEGDFYRA (913 aa)) are disordered. Residues Pro10, Pro13, Pro35, and Pro41 each carry the 4-hydroxyproline modification. Low complexity-rich tracts occupy residues 28–67 (LMGPRGPPGASGAPGPQGFQGPAGEPGEPGQTGPAGARGP), 125–154 (VGAPGPAGARGSDGSVGPVGPAGPIGSAGP), and 199–220 (PGANGLTGAKGAAGLPGVAGAP). The span at 254–263 (GESGGKGEPG) shows a compositional bias: gly residues. Residues 264–274 (SAGPQGPPGSS) are compositionally biased toward low complexity. The segment covering 281–303 (GPNGGSTGPTGPPGLRGGPGSRG) has biased composition (gly residues). Low complexity predominate over residues 316–332 (PAGARGASGPAGVRGPS). Pro338 and Pro341 each carry 4-hydroxyproline. 2 stretches are compositionally biased toward low complexity: residues 367–386 (LPGIDGRPGPIGPAGARGEA) and 408–421 (PDGNNGAQGPPGLQ). The span at 422-431 (GVQGGKGTTG) shows a compositional bias: gly residues. 2 stretches are compositionally biased toward low complexity: residues 459-476 (PGESGAVGPSGAIGSRGP) and 488-498 (EPGVVGAPGTA). Gly residues predominate over residues 499–517 (GPAGSGGPGERGAAGIPGG). Composition is skewed to low complexity over residues 527–574 (RGEV…PRGS) and 581–601 (VGPAGPNGFAGPAGAAGQPGA). Positions 602–611 (KGERGTKGPK) are enriched in basic and acidic residues. Residues 619-629 (PTGPVGSAGPA) are compositionally biased toward low complexity. The segment covering 639 to 648 (GSRGDGGPPG) has biased composition (gly residues). Over residues 650-659 (TGFPGAAGRT) the composition is skewed to low complexity. A compositionally biased stretch (gly residues) spans 696 to 705 (GETGAGGPPG). 2 stretches are compositionally biased toward low complexity: residues 713–740 (SGEPGTAGPPGTAGPQGLLGAPGILGLP) and 748–758 (LPGVAGAVGEP). Residues 759-776 (GPLGIGPPGARGPSGAGK) are compositionally biased toward gly residues. Low complexity predominate over residues 782–797 (EPGPVGSVGPVGALGP). Positions 807 to 818 (RGDKGEPGEKGP) are enriched in basic and acidic residues. The span at 883–895 (SGPPGPPGPPGPP) shows a compositional bias: pro residues.

This sequence belongs to the fibrillar collagen family. As to quaternary structure, trimers of one alpha 2(I) and two alpha 1(I) chains. Interacts (via C-terminus) with TMEM131 (via PapD-L domain); the interaction is direct and is involved in assembly and TRAPPIII ER-to-Golgi transport complex-dependent secretion of collagen. Prolines at the third position of the tripeptide repeating unit (G-X-Y) are hydroxylated in some or all of the chains. As to expression, expressed in bones.

It localises to the secreted. It is found in the extracellular space. The protein resides in the extracellular matrix. Its function is as follows. Type I collagen is a member of group I collagen (fibrillar forming collagen). The sequence is that of Collagen alpha-2(I) chain from Parocnus serus (Greater Haitian ground sloth).